We begin with the raw amino-acid sequence, 1407 residues long: E3 ubiquitin-protein ligase linker protein MMS1 (1407 aa).

The interval 1-600 (MLGLRTHGLD…QFQIFRHLRI (600 aa)) is required for interaction with MMS22. T1294 is subject to Phosphothreonine.

In terms of assembly, component of multiple cullin-RING ligases (CRLs) composed of 4 subunits: the RING protein HRT1, the cullin RTT101, a linker protein MMS1, and one of many alternative substrate receptors belonging to a protein family described as DCAF (DDB1- and CUL4-associated factor). Component of a RTT101(MMS1-MMS22) complex with the substrate receptor MMS22. This complex further interacts with RTT107 and CTF4 to form RTT101-MMS1-MMS22-RTT107 and RTT101-MMS1-MMS22-CTF4 complexes respectively. Component of a RTT101(MSS1-CRT10) complex with the substrate receptor CRT10. Component of a RTT101(MSS1-ESC2) complex with the potential substrate receptor ESC2. Component of a RTT101(MSS1-ORC5) complex with the potential substrate receptor ORC5. Interacts with RTT101 (via N-ter). Interacts (via N-ter) with MMS22 (via C-ter). Interacts with CRT10.

The protein resides in the nucleus. Component of multiple cullin-RING-based E3 ubiquitin-protein ligase complexes (CRLs), which mediate the ubiquitination of target proteins. The CRL associates with CDC34 as the E2 ubiquitin-conjugating enzyme. The functional specificity of the CRL depends on the type of the associated substrate receptor protein. RTT101(MMS1-MMS22) promotes fork progression through damaged DNA or natural pause sites by stabilizing replication proteins like the replication fork-pausing complex (FPC) and leading-strand polymerase at stalled replication forks. RTT101(MMS1-MMS22) ubiquitinates the acetylated histones H3K56ac-H4 at lysine residues H3K121, H3K122 and H3K125. Ubiquitination is required for efficient histone deposition during replication-coupled nucleosome assembly, probably by facilitating the transfer of H3-H4 from ASF1 to other chaperones involved in histone deposition. RTT101(MMS1-CRT10) may regulate nucleotide synthesis through transcriptional regulation of ribonucleotide reductase. RTT101(MMS1) is also involved in the non-functional rRNA decay (NRD) of 25S rRNA through the selective, ubiquitination-dependent degradation of nonfunctional ribosomal particles. Involved in the regulation of TY1 transposition. The protein is E3 ubiquitin-protein ligase linker protein MMS1 (MMS1) of Saccharomyces cerevisiae (strain ATCC 204508 / S288c) (Baker's yeast).